Reading from the N-terminus, the 600-residue chain is Epidermal growth factor receptor kinase substrate 8-like protein 3 (600 aa).

The 128-residue stretch at 28 to 155 folds into the PTB domain; that stretch reads QHRVEHLMTC…ALEEELEERP (128 aa). Disordered regions lie at residues 152-245 and 429-452; these read EERP…PERD and LHFP…PLSS. Residues 204–214 show a composition bias toward low complexity; sequence SERSISPSSRS. Serine 238 is modified (phosphoserine). One can recognise an SH3 domain in the interval 457–516; sequence RAALKMQVLYEFEARNAQELTVAQGEILEVLDQSKRWWLVKNEAGLTGYIPSNILEPLPA.

It belongs to the EPS8 family. In terms of assembly, interacts with ABI1. Part of a complex that contains SOS1, ABI1 and EPS8L2. Interacts with FASLG. Detected in embryonic gut. Detected in adult testis, placenta, adrenal gland and intestine.

Its subcellular location is the cytoplasm. In Mus musculus (Mouse), this protein is Epidermal growth factor receptor kinase substrate 8-like protein 3 (Eps8l3).